The following is a 1249-amino-acid chain: Protein lingerer (1249 aa).

Residues 1–66 (MSTQTRSGGG…VVKAKQPTAE (66 aa)) form a disordered region. 2 stretches are compositionally biased toward gly residues: residues 7–30 (SGGG…GAAG) and 38–50 (GSTG…GAGG). Residues 84-124 (KIQEKIQSLMETTQRSEEEVCCALQECDSDLDRAVIFLLET) form the UBA domain. 10 disordered regions span residues 132–312 (TTSK…LKPE), 350–375 (SAGA…ASNV), 454–506 (MPPM…PPTT), 549–579 (YAAA…AVEM), 616–717 (TTGT…TSVS), 738–922 (PYGQ…SLPI), 1016–1042 (GRFT…TGSG), 1124–1149 (QQQS…APSM), 1164–1186 (KQSF…AGTT), and 1211–1249 (QNMH…TGPN). The span at 186 to 209 (NRGGSGNQRSGGPGRGGRAGGYRD) shows a compositional bias: gly residues. Basic and acidic residues predominate over residues 210 to 227 (GGGDRDRDRDRNGYDKGG). Gly residues-rich tracts occupy residues 228–240 (EGGG…GGDG) and 248–269 (DGPG…GGPR). Positions 350 to 369 (SAGAGAQQQQSQQSTQTGVP) are enriched in low complexity. A compositionally biased stretch (polar residues) spans 457–494 (MNTSSSLSAEQSQYFSTLSSQNSNLQPTPSAVGFQQQP). 3 stretches are compositionally biased toward low complexity: residues 549–559 (YAAAATQQPPV), 616–639 (TTGT…PATV), and 647–664 (QSQL…APQQ). Polar residues predominate over residues 678-705 (ASSQIMPGQGTTEALSSQNDGLANSYSR). The span at 706–717 (TNASGSVSTSVS) shows a compositional bias: low complexity. Polar residues-rich tracts occupy residues 738–769 (PYGQ…TASY) and 777–809 (GYNN…NVNA). A compositionally biased stretch (low complexity) spans 811–861 (QPPSSSVTNNVVPNNNTGNSVGGVSNQSNLPVNNNAVNSSSNNNAGGYLSS). Polar residues predominate over residues 862–873 (QYPVSQTSSAFP). Composition is skewed to low complexity over residues 874–884 (SQQNYQNSSQN), 892–922 (NSNT…SLPI), and 1023–1034 (NNSSPVSNVPSS). The span at 1124–1138 (QQQSKGQTVANQQSG) shows a compositional bias: polar residues. A compositionally biased stretch (polar residues) spans 1216-1249 (DSNSSGQRPQNNNQGKTASKQQGYSASTYWTGPN).

It localises to the cytoplasm. Its function is as follows. Acts in the nervous system to mediate the control of copulatory organs during courtship. The chain is Protein lingerer from Anopheles gambiae (African malaria mosquito).